We begin with the raw amino-acid sequence, 398 residues long: Phosphoglycerate kinase (398 aa).

Substrate contacts are provided by residues 21–23 (DFN), R36, 59–62 (HLGR), R119, and R157. ATP-binding positions include K208, G296, E327, and 354 to 357 (GGDS).

This sequence belongs to the phosphoglycerate kinase family. Monomer.

It is found in the cytoplasm. It carries out the reaction (2R)-3-phosphoglycerate + ATP = (2R)-3-phospho-glyceroyl phosphate + ADP. The protein operates within carbohydrate degradation; glycolysis; pyruvate from D-glyceraldehyde 3-phosphate: step 2/5. The protein is Phosphoglycerate kinase of Lactococcus lactis subsp. cremoris (strain MG1363).